The following is a 447-amino-acid chain: UPF0210 protein OEOE_0945 (447 aa).

The protein belongs to the UPF0210 family. As to quaternary structure, homodimer.

The chain is UPF0210 protein OEOE_0945 from Oenococcus oeni (strain ATCC BAA-331 / PSU-1).